Consider the following 257-residue polypeptide: DNA-binding and peroxide stress resistance protein YaaA (257 aa).

The Helix-hairpin-helix motif lies at 35–66 (IGIARKLSAPQIGKLMSISDKLADLNATRFHD).

The protein belongs to the UPF0246 family.

It localises to the cytoplasm. Functionally, protects bacteria from neutrophil-related defense upon infection of mammals. Binds DNA. This Klebsiella pneumoniae subsp. pneumoniae (strain HS11286) protein is DNA-binding and peroxide stress resistance protein YaaA.